An 837-amino-acid polypeptide reads, in one-letter code: Protein translocase subunit SecA (837 aa).

ATP contacts are provided by residues Gln83, 101–105, and Asp494; that span reads GEGKT.

The protein belongs to the SecA family. As to quaternary structure, monomer and homodimer. Part of the essential Sec protein translocation apparatus which comprises SecA, SecYEG and auxiliary proteins SecDF. Other proteins may also be involved.

It localises to the cell membrane. The protein localises to the cytoplasm. It carries out the reaction ATP + H2O + cellular proteinSide 1 = ADP + phosphate + cellular proteinSide 2.. Functionally, part of the Sec protein translocase complex. Interacts with the SecYEG preprotein conducting channel. Has a central role in coupling the hydrolysis of ATP to the transfer of proteins into and across the cell membrane, serving as an ATP-driven molecular motor driving the stepwise translocation of polypeptide chains across the membrane. The polypeptide is Protein translocase subunit SecA (Ureaplasma parvum serovar 3 (strain ATCC 27815 / 27 / NCTC 11736)).